The chain runs to 460 residues: Chromosomal replication initiator protein DnaA (460 aa).

Residues 1–78 (MENFWQACSA…VPVEVQFVLD (78 aa)) are domain I, interacts with DnaA modulators. Residues 78–123 (DPRLVAARRPAAQASVVSDRADDVPSNVLEPIPSNATDHTPRRDQS) form a domain II region. The interval 124-340 (RINTALTFDS…GALRKILAYS (217 aa)) is domain III, AAA+ region. G168, G170, K171, and T172 together coordinate ATP. Positions 341 to 460 (RFHGKDITIE…LHVLEQTLKG (120 aa)) are domain IV, binds dsDNA.

Belongs to the DnaA family. In terms of assembly, oligomerizes as a right-handed, spiral filament on DNA at oriC.

It is found in the cytoplasm. Plays an essential role in the initiation and regulation of chromosomal replication. ATP-DnaA binds to the origin of replication (oriC) to initiate formation of the DNA replication initiation complex once per cell cycle. Binds the DnaA box (a 9 base pair repeat at the origin) and separates the double-stranded (ds)DNA. Forms a right-handed helical filament on oriC DNA; dsDNA binds to the exterior of the filament while single-stranded (ss)DNA is stabiized in the filament's interior. The ATP-DnaA-oriC complex binds and stabilizes one strand of the AT-rich DNA unwinding element (DUE), permitting loading of DNA polymerase. After initiation quickly degrades to an ADP-DnaA complex that is not apt for DNA replication. Binds acidic phospholipids. This is Chromosomal replication initiator protein DnaA from Herminiimonas arsenicoxydans.